The sequence spans 953 residues: Translation initiation factor IF-2 (953 aa).

2 disordered regions span residues 48–248 and 279–363; these read SSFS…AELA and TKLK…TERK. Composition is skewed to basic and acidic residues over residues 80-89, 98-111, and 140-188; these read TGSEHAEKTQ, FKAEREARAKEQAA, and QGDK…ENHK. Residues 191 to 207 are compositionally biased toward polar residues; it reads RFTNQKKQGRQEPQSKS. Positions 229–248 are enriched in basic and acidic residues; that stretch reads RQSETRFRAQQEAKRLAELA. Positions 282–291 are enriched in polar residues; sequence KSSNISAKST. Residues 300-317 show a composition bias toward basic and acidic residues; it reads ARPEKNRELTHHSQEGQK. Over residues 322-338 the composition is skewed to low complexity; it reads SWNSQNQVRNQKNSNWN. Residues 339–348 are compositionally biased toward basic residues; it reads KNKKTKKGKN. The tr-type G domain occupies 454 to 623; it reads ERAPVVTIMG…LLVAEVEELK (170 aa). The segment at 463 to 470 is G1; the sequence is GHVDHGKT. 463–470 serves as a coordination point for GTP; it reads GHVDHGKT. A G2 region spans residues 488–492; it reads GITQH. The segment at 509 to 512 is G3; the sequence is DTPG. GTP-binding positions include 509–513 and 563–566; these read DTPGH and NKID. A G4 region spans residues 563 to 566; that stretch reads NKID. Residues 599 to 601 are G5; that stretch reads SAK.

It belongs to the TRAFAC class translation factor GTPase superfamily. Classic translation factor GTPase family. IF-2 subfamily.

The protein localises to the cytoplasm. In terms of biological role, one of the essential components for the initiation of protein synthesis. Protects formylmethionyl-tRNA from spontaneous hydrolysis and promotes its binding to the 30S ribosomal subunits. Also involved in the hydrolysis of GTP during the formation of the 70S ribosomal complex. The chain is Translation initiation factor IF-2 from Streptococcus pyogenes serotype M18 (strain MGAS8232).